A 447-amino-acid chain; its full sequence is MNAWEVNFDGLVGLTHHYAGLSFGNEASTSHRFQVSNPRLAAKQGLLKMKALADLGFPQAVIPPHERPFIPVLRQLGFSGSDEQVLEKVARQAPHWLSSVSSASPMWVANAATVAPSADTLDGKVHLTVANLNNKFHRSLEAPVTESLLKAIFNEEKKFAIHSALPQVALLGDEGAANHNRLGGHYGEPGIQLFVYGREEGNVSRPSRYPARQTREASEAVARLNQVNPQQVIFAQQNPDVIDQGVFHNDVIAVSNRQVLFCHQQAFARQAQLLANLRSRVNGFMAIEVPATQVSVSDAVSTYLFNSQLLSRDDGSMMLVLPQECREHAGVWGYLNELLAADNPIRELKVFDLRESMANGGGPACLRLRVVLTEEERRAVNPAVMMNDTLFNALNDWVERYYRDRLTAADLADPLLLREGREALDVLSQLLNLGSVYPFQREGGGNG.

Residues 19–28 (AGLSFGNEAS), Asn-110, and 137–138 (HR) each bind substrate. Glu-174 is an active-site residue. Arg-212 is a binding site for substrate. Residue His-248 is part of the active site. The substrate site is built by Asp-250 and Asn-359. The Nucleophile role is filled by Cys-365.

Belongs to the succinylarginine dihydrolase family. Homodimer.

It carries out the reaction N(2)-succinyl-L-arginine + 2 H2O + 2 H(+) = N(2)-succinyl-L-ornithine + 2 NH4(+) + CO2. Its pathway is amino-acid degradation; L-arginine degradation via AST pathway; L-glutamate and succinate from L-arginine: step 2/5. Catalyzes the hydrolysis of N(2)-succinylarginine into N(2)-succinylornithine, ammonia and CO(2). The protein is N-succinylarginine dihydrolase of Escherichia fergusonii (strain ATCC 35469 / DSM 13698 / CCUG 18766 / IAM 14443 / JCM 21226 / LMG 7866 / NBRC 102419 / NCTC 12128 / CDC 0568-73).